The following is a 543-amino-acid chain: Acrosin-binding protein (543 aa).

The signal sequence occupies residues 1 to 25; that stretch reads MGQPAAGSILTLLRVLLLPLGPALA. The segment at 26–106 is pro-ACR binding; it reads QDSPSAPTPG…ASWFESFCQF (81 aa). A propeptide spans 26 to 276 (removed in mature form); that stretch reads QDSPSAPTPG…DPHSFTARVR (251 aa). The tract at residues 187–239 is disordered; it reads AGQEQAAGHKQEQGQEQHKQDPTQEHKQDDGQEQEEQEEEQEEEGKQEEGQSV. Over residues 193–216 the composition is skewed to basic and acidic residues; the sequence is AGHKQEQGQEQHKQDPTQEHKQDD. Over residues 217 to 232 the composition is skewed to acidic residues; sequence GQEQEEQEEEQEEEGK. The segment at 319-427 is pro-ACR binding; that stretch reads LPHKEALLVL…TQAGTSESGR (109 aa).

Binds proacrosin (ACR). Does not bind the mature form of ACR. Post-translationally, the N-terminus is blocked. In terms of processing, phosphorylated on Tyr residues in capacitated sperm. Synthesized as a 60-kDa precursor, the 32-kDa mature form is post-translationally produced by the removal of the N-terminal half of the precursor during sperm maturation in the testis and/or epididymis. As to expression, specifically expressed in testis.

Its subcellular location is the secreted. It localises to the cytoplasmic vesicle. The protein resides in the secretory vesicle. The protein localises to the acrosome. Functionally, acrosomal protein that maintains proacrosin (pro-ACR) as an enzymatically inactive zymogen in the acrosome. Involved also in the acrosome formation. This Cavia porcellus (Guinea pig) protein is Acrosin-binding protein (ACRBP).